The following is a 392-amino-acid chain: Alkaline phosphatase L (392 aa).

The first 23 residues, 1–23, serve as a signal peptide directing secretion; it reads MYKRSLIAASLSVAALVSAQAMA.

Belongs to the PstS family. In terms of assembly, homodimer.

It localises to the secreted. It is found in the periplasm. It carries out the reaction a phosphate monoester + H2O = an alcohol + phosphate. Its function is as follows. Has both a phosphomonoesterase and phosphodiesterase activity. In Pseudomonas aeruginosa (strain UCBPP-PA14), this protein is Alkaline phosphatase L.